A 988-amino-acid chain; its full sequence is DExH-box ATP-dependent RNA helicase DExH9 (988 aa).

A disordered region spans residues 1 to 27; that stretch reads MGSVKRKSVEESSDSAPPQKVQREDDS. The Helicase ATP-binding domain maps to 76–232; it reads IKCLDNGESV…WVAKVHQQPC (157 aa). Residue 89–96 coordinates ATP; sequence AHTSAGKT. A DEVH box motif is present at residues 180 to 183; the sequence is DEVH. The 203-residue stretch at 307–509 folds into the Helicase C-terminal domain; the sequence is DIFKLVKMII…SYNMLLNQLR (203 aa).

It belongs to the DExH box helicase family. SKI2 subfamily. Ubiquitous but preferentially expressed in active tissues.

It is found in the nucleus. The protein resides in the nucleolus. It carries out the reaction ATP + H2O = ADP + phosphate + H(+). In terms of biological role, ATP-dependent RNA helicase that associates with the RNA exosome complex. Required for proper rRNA biogenesis and development. Involved in the 3'-processing of the 7S pre-RNA to the mature 5.8S rRNA and also in the removal of rRNA maturation by-products. The sequence is that of DExH-box ATP-dependent RNA helicase DExH9 from Arabidopsis thaliana (Mouse-ear cress).